Here is a 308-residue protein sequence, read N- to C-terminus: Protease HtpX homolog (308 aa).

A run of 2 helical transmembrane segments spans residues 16-36 (LLSL…IYAV) and 39-59 (YLFG…VLMM). His149 provides a ligand contact to Zn(2+). Glu150 is a catalytic residue. His153 contributes to the Zn(2+) binding site. 2 consecutive transmembrane segments (helical) span residues 161-181 (VIMA…TTLF) and 192-212 (IILA…VLSV). Zn(2+) is bound at residue Glu217.

This sequence belongs to the peptidase M48B family. The cofactor is Zn(2+).

It is found in the cell membrane. This is Protease HtpX homolog from Thermoplasma volcanium (strain ATCC 51530 / DSM 4299 / JCM 9571 / NBRC 15438 / GSS1).